A 232-amino-acid polypeptide reads, in one-letter code: 7-cyano-7-deazaguanine synthase (232 aa).

Residue cysteine 7–alanine 17 coordinates ATP. The Zn(2+) site is built by cysteine 185, cysteine 193, cysteine 196, and cysteine 199.

This sequence belongs to the QueC family. Zn(2+) serves as cofactor.

The enzyme catalyses 7-carboxy-7-deazaguanine + NH4(+) + ATP = 7-cyano-7-deazaguanine + ADP + phosphate + H2O + H(+). Its pathway is purine metabolism; 7-cyano-7-deazaguanine biosynthesis. Its function is as follows. Catalyzes the ATP-dependent conversion of 7-carboxy-7-deazaguanine (CDG) to 7-cyano-7-deazaguanine (preQ(0)). The polypeptide is 7-cyano-7-deazaguanine synthase (Brucella canis (strain ATCC 23365 / NCTC 10854 / RM-666)).